The sequence spans 611 residues: Glutamine--fructose-6-phosphate aminotransferase [isomerizing] (611 aa).

Cys-2 acts as the Nucleophile; for GATase activity in catalysis. The Glutamine amidotransferase type-2 domain occupies Cys-2–Asp-219. SIS domains follow at residues Ala-287 to Arg-427 and Val-460 to Pro-601. Lys-606 (for Fru-6P isomerization activity) is an active-site residue.

In terms of assembly, homodimer.

It localises to the cytoplasm. The enzyme catalyses D-fructose 6-phosphate + L-glutamine = D-glucosamine 6-phosphate + L-glutamate. Functionally, catalyzes the first step in hexosamine metabolism, converting fructose-6P into glucosamine-6P using glutamine as a nitrogen source. The polypeptide is Glutamine--fructose-6-phosphate aminotransferase [isomerizing] (Pseudomonas aeruginosa (strain ATCC 15692 / DSM 22644 / CIP 104116 / JCM 14847 / LMG 12228 / 1C / PRS 101 / PAO1)).